The following is a 23-amino-acid chain: Brevinin-1SE (23 aa).

Cys17 and Cys23 are disulfide-bonded.

As to expression, expressed by the skin glands.

The protein localises to the secreted. In terms of biological role, mast cell degranulating peptide. Causes histamine release from rat peritoneal mast cells in vitro. Has antibacterial activity against the Gram-negative bacterium E.coli K12 and Gram-positive bacterium M.luteus NCT C2665. This Lithobates sevosus (Dusky gopher frog) protein is Brevinin-1SE.